A 138-amino-acid chain; its full sequence is Small ribosomal subunit protein uS11c (138 aa).

Residues Met-1–Arg-23 are disordered. Residues Gly-9 to Arg-23 show a composition bias toward basic residues.

It belongs to the universal ribosomal protein uS11 family. Part of the 30S ribosomal subunit.

The protein resides in the plastid. Its subcellular location is the chloroplast. The chain is Small ribosomal subunit protein uS11c from Daucus carota (Wild carrot).